Reading from the N-terminus, the 461-residue chain is Cysteine--tRNA ligase (461 aa).

Position 29 (Cys29) interacts with Zn(2+). Residues 31-41 carry the 'HIGH' region motif; that stretch reads MTVYDFCHIGH. Residues Cys210, His235, and Glu239 each coordinate Zn(2+). Positions 267 to 271 match the 'KMSKS' region motif; sequence KMSKS. Lys270 is a binding site for ATP.

Belongs to the class-I aminoacyl-tRNA synthetase family. In terms of assembly, monomer. It depends on Zn(2+) as a cofactor.

It localises to the cytoplasm. It catalyses the reaction tRNA(Cys) + L-cysteine + ATP = L-cysteinyl-tRNA(Cys) + AMP + diphosphate. The chain is Cysteine--tRNA ligase from Azotobacter vinelandii (strain DJ / ATCC BAA-1303).